Reading from the N-terminus, the 91-residue chain is Small ribosomal subunit protein uS15 (91 aa).

Belongs to the universal ribosomal protein uS15 family. In terms of assembly, part of the 30S ribosomal subunit. Forms a bridge to the 50S subunit in the 70S ribosome, contacting the 23S rRNA.

Its function is as follows. One of the primary rRNA binding proteins, it binds directly to 16S rRNA where it helps nucleate assembly of the platform of the 30S subunit by binding and bridging several RNA helices of the 16S rRNA. Functionally, forms an intersubunit bridge (bridge B4) with the 23S rRNA of the 50S subunit in the ribosome. This is Small ribosomal subunit protein uS15 from Rickettsia peacockii (strain Rustic).